Consider the following 363-residue polypeptide: Chorismate synthase (363 aa).

NADP(+) contacts are provided by R48 and R54. FMN-binding positions include 125-127 (RSS), 237-238 (NA), G277, 292-296 (KPTSS), and R318.

Belongs to the chorismate synthase family. Homotetramer. FMNH2 is required as a cofactor.

The catalysed reaction is 5-O-(1-carboxyvinyl)-3-phosphoshikimate = chorismate + phosphate. It functions in the pathway metabolic intermediate biosynthesis; chorismate biosynthesis; chorismate from D-erythrose 4-phosphate and phosphoenolpyruvate: step 7/7. Its function is as follows. Catalyzes the anti-1,4-elimination of the C-3 phosphate and the C-6 proR hydrogen from 5-enolpyruvylshikimate-3-phosphate (EPSP) to yield chorismate, which is the branch point compound that serves as the starting substrate for the three terminal pathways of aromatic amino acid biosynthesis. This reaction introduces a second double bond into the aromatic ring system. This is Chorismate synthase from Pseudomonas savastanoi pv. phaseolicola (strain 1448A / Race 6) (Pseudomonas syringae pv. phaseolicola (strain 1448A / Race 6)).